The primary structure comprises 777 residues: Zinc finger protein 786 (777 aa).

The 72-residue stretch at 9–80 (LTFEDVAIYF…WGEKKKPDKE (72 aa)) folds into the KRAB domain. The C2H2-type 1; degenerate zinc-finger motif lies at 194–216 (NSCPVCRENSWEKNHLVKQQKGH). The segment at 240 to 262 (ISCLGCGKSFRLKQYLVRHLDIH) adopts a C2H2-type 2 zinc-finger fold. The C2H2-type 3; degenerate zinc finger occupies 268-291 (PQCPKCKMCFHHERTLFSHHLKNS). The C2H2-type 4; degenerate zinc-finger motif lies at 420–442 (VFCRKCGQGFTKHCGLTEHTRIL). 11 C2H2-type zinc fingers span residues 448-470 (FWCA…QRLH), 476-498 (FQCT…QLQH), 504-526 (FSCS…LRVH), 532-554 (FQCP…QRIH), 560-582 (FSCG…FRVH), 588-610 (FQCP…QRLH), 616-638 (FQCP…QLLH), 644-665 (FSCQ…MRTH), 671-693 (FQCP…QGLH), 699-721 (FHCP…QRIH), and 727-749 (FACG…IRVH).

It belongs to the krueppel C2H2-type zinc-finger protein family.

Its subcellular location is the nucleus. May be involved in transcriptional regulation. The chain is Zinc finger protein 786 (Znf786) from Mus musculus (Mouse).